The primary structure comprises 276 residues: Ribosomal RNA small subunit methyltransferase A (276 aa).

Residues Asn27, Leu29, Gly54, Glu75, Asp101, and Asn123 each contribute to the S-adenosyl-L-methionine site.

It belongs to the class I-like SAM-binding methyltransferase superfamily. rRNA adenine N(6)-methyltransferase family. RsmA subfamily.

It localises to the cytoplasm. The enzyme catalyses adenosine(1518)/adenosine(1519) in 16S rRNA + 4 S-adenosyl-L-methionine = N(6)-dimethyladenosine(1518)/N(6)-dimethyladenosine(1519) in 16S rRNA + 4 S-adenosyl-L-homocysteine + 4 H(+). Functionally, specifically dimethylates two adjacent adenosines (A1518 and A1519) in the loop of a conserved hairpin near the 3'-end of 16S rRNA in the 30S particle. May play a critical role in biogenesis of 30S subunits. The chain is Ribosomal RNA small subunit methyltransferase A from Bartonella bacilliformis (strain ATCC 35685 / KC583 / Herrer 020/F12,63).